Here is an 84-residue protein sequence, read N- to C-terminus: Small ribosomal subunit protein eS27z (84 aa).

The C4-type zinc finger occupies 39-61 (CQGCFNITTVFSHSQTVVMCGNC).

This sequence belongs to the eukaryotic ribosomal protein eS27 family. As to quaternary structure, (Microbial infection) May interact with Tomato yellow leaf curl virus (TYLCV) and papaya leaf curl China virus (PaLcuCNV) C2 proteins. This interaction prevents activation of Jasmonate signaling, thereby facilitating viral uptake by insects vectors. Zn(2+) serves as cofactor.

The chain is Small ribosomal subunit protein eS27z (RPS27A) from Arabidopsis thaliana (Mouse-ear cress).